Here is a 480-residue protein sequence, read N- to C-terminus: 3-isopropylmalate dehydratase large subunit (480 aa).

The [4Fe-4S] cluster site is built by C361, C421, and C424.

It belongs to the aconitase/IPM isomerase family. LeuC type 1 subfamily. Heterodimer of LeuC and LeuD. The cofactor is [4Fe-4S] cluster.

The catalysed reaction is (2R,3S)-3-isopropylmalate = (2S)-2-isopropylmalate. It functions in the pathway amino-acid biosynthesis; L-leucine biosynthesis; L-leucine from 3-methyl-2-oxobutanoate: step 2/4. Catalyzes the isomerization between 2-isopropylmalate and 3-isopropylmalate, via the formation of 2-isopropylmaleate. This chain is 3-isopropylmalate dehydratase large subunit, found in Corynebacterium diphtheriae (strain ATCC 700971 / NCTC 13129 / Biotype gravis).